We begin with the raw amino-acid sequence, 176 residues long: ATP synthase subunit b (176 aa).

The chain crosses the membrane as a helical span at residues 7–27; the sequence is IQIPDGSAIFVLLTFILLMFI. Residues 75–94 form a disordered region; sequence SQSQATALMENARKSSEEQS. The span at 85–94 shows a compositional bias: basic and acidic residues; it reads NARKSSEEQS.

The protein belongs to the ATPase B chain family. In terms of assembly, F-type ATPases have 2 components, F(1) - the catalytic core - and F(0) - the membrane proton channel. F(1) has five subunits: alpha(3), beta(3), gamma(1), delta(1), epsilon(1). F(0) has three main subunits: a(1), b(2) and c(10-14). The alpha and beta chains form an alternating ring which encloses part of the gamma chain. F(1) is attached to F(0) by a central stalk formed by the gamma and epsilon chains, while a peripheral stalk is formed by the delta and b chains.

It is found in the cell membrane. F(1)F(0) ATP synthase produces ATP from ADP in the presence of a proton or sodium gradient. F-type ATPases consist of two structural domains, F(1) containing the extramembraneous catalytic core and F(0) containing the membrane proton channel, linked together by a central stalk and a peripheral stalk. During catalysis, ATP synthesis in the catalytic domain of F(1) is coupled via a rotary mechanism of the central stalk subunits to proton translocation. In terms of biological role, component of the F(0) channel, it forms part of the peripheral stalk, linking F(1) to F(0). The protein is ATP synthase subunit b of Oenococcus oeni (strain ATCC BAA-331 / PSU-1).